Consider the following 77-residue polypeptide: Large ribosomal subunit protein eL20 (77 aa).

The protein belongs to the eukaryotic ribosomal protein eL20 family. As to quaternary structure, part of the 50S ribosomal subunit. Binds 23S rRNA.

In Pyrococcus furiosus (strain ATCC 43587 / DSM 3638 / JCM 8422 / Vc1), this protein is Large ribosomal subunit protein eL20.